The primary structure comprises 294 residues: Acetylglutamate kinase (294 aa).

Substrate-binding positions include 63 to 64 (GG), arginine 85, and asparagine 188.

Belongs to the acetylglutamate kinase family. ArgB subfamily.

It localises to the cytoplasm. The catalysed reaction is N-acetyl-L-glutamate + ATP = N-acetyl-L-glutamyl 5-phosphate + ADP. It functions in the pathway amino-acid biosynthesis; L-arginine biosynthesis; N(2)-acetyl-L-ornithine from L-glutamate: step 2/4. In terms of biological role, catalyzes the ATP-dependent phosphorylation of N-acetyl-L-glutamate. In Methanococcus maripaludis (strain C7 / ATCC BAA-1331), this protein is Acetylglutamate kinase.